A 149-amino-acid polypeptide reads, in one-letter code: Protein FAM72B (149 aa).

It belongs to the FAM72 family.

This chain is Protein FAM72B (FAM72B), found in Homo sapiens (Human).